A 402-amino-acid chain; its full sequence is Formate-dependent phosphoribosylglycinamide formyltransferase (402 aa).

N(1)-(5-phospho-beta-D-ribosyl)glycinamide is bound by residues 25–26 and Glu-85; that span reads EL. ATP contacts are provided by residues Arg-118, Lys-159, 164–169, 199–202, and Glu-207; these read SSGKGQ and EQFV. One can recognise an ATP-grasp domain in the interval 123–318; sequence RLASEELGLP…EFELHAKAVL (196 aa). Residues Glu-277 and Glu-289 each contribute to the Mg(2+) site. N(1)-(5-phospho-beta-D-ribosyl)glycinamide-binding positions include Asp-296, Lys-365, and 372–373; that span reads RR.

The protein belongs to the PurK/PurT family. Homodimer.

The catalysed reaction is N(1)-(5-phospho-beta-D-ribosyl)glycinamide + formate + ATP = N(2)-formyl-N(1)-(5-phospho-beta-D-ribosyl)glycinamide + ADP + phosphate + H(+). Its pathway is purine metabolism; IMP biosynthesis via de novo pathway; N(2)-formyl-N(1)-(5-phospho-D-ribosyl)glycinamide from N(1)-(5-phospho-D-ribosyl)glycinamide (formate route): step 1/1. Involved in the de novo purine biosynthesis. Catalyzes the transfer of formate to 5-phospho-ribosyl-glycinamide (GAR), producing 5-phospho-ribosyl-N-formylglycinamide (FGAR). Formate is provided by PurU via hydrolysis of 10-formyl-tetrahydrofolate. This Corynebacterium efficiens (strain DSM 44549 / YS-314 / AJ 12310 / JCM 11189 / NBRC 100395) protein is Formate-dependent phosphoribosylglycinamide formyltransferase.